The chain runs to 281 residues: Pantothenate synthetase (281 aa).

30-37 (MGYLHEGH) lines the ATP pocket. The active-site Proton donor is the His-37. Gln-61 contributes to the (R)-pantoate binding site. A beta-alanine-binding site is contributed by Gln-61. 147-150 (GEKD) contacts ATP. Gln-153 contacts (R)-pantoate. ATP is bound by residues Ile-176 and 184 to 187 (KSSR).

It belongs to the pantothenate synthetase family. In terms of assembly, homodimer.

Its subcellular location is the cytoplasm. It carries out the reaction (R)-pantoate + beta-alanine + ATP = (R)-pantothenate + AMP + diphosphate + H(+). It functions in the pathway cofactor biosynthesis; (R)-pantothenate biosynthesis; (R)-pantothenate from (R)-pantoate and beta-alanine: step 1/1. Functionally, catalyzes the condensation of pantoate with beta-alanine in an ATP-dependent reaction via a pantoyl-adenylate intermediate. The protein is Pantothenate synthetase of Clostridium botulinum (strain Kyoto / Type A2).